A 309-amino-acid chain; its full sequence is MDYNLSDHYALMCHSAPLEFDPSDPEVDLVNQEFDEDDYTDLDVNLLSDDLSYLNLLATRIKNSPEDTAEIFDSFDIPLPFAELLDQEIGDEWCEIHNFADLRIVENENEFEFVSSHITRHLLIVLNSNPNILWTSTCLLAKLSLIQHVENFDVINYWEAMNRRWELITDELKIGFVFRAFNLKGNQFEVIMKLLGDSLLYPGINVIGKLSMVPMFTVHSIPAYLDHWFRTDDFQRCKFLSFIRFGEITVPKWKKVVVQFYLRQVFSRVRTKVLIANTDVDYWYSLFMRTLVFKSMLSTKNMIKKILNS.

This is Probable non-structural 36.3 kDa protein (S6) from Avena sativa (Oat).